Reading from the N-terminus, the 737-residue chain is Dynein axonemal intermediate chain 7 homolog (737 aa).

The span at 1-15 (MPPKSPNRSGKSTPT) shows a compositional bias: polar residues. Disordered regions lie at residues 1-61 (MPPK…ERRA), 274-362 (KKVK…DDEE), and 410-452 (STVK…QQPP). Basic and acidic residues-rich tracts occupy residues 18–61 (RPGE…ERRA), 276–316 (VKDE…EGRQ), and 333–349 (EETK…DAVK). Polar residues-rich tracts occupy residues 417–429 (DNPN…SRVA) and 441–451 (PSKTPLEQQQP).

It belongs to the DNAI7 family.

This chain is Dynein axonemal intermediate chain 7 homolog (AXP83.9), found in Ciona intestinalis (Transparent sea squirt).